The following is a 405-amino-acid chain: Bifunctional enzyme IspD/IspF (405 aa).

The 2-C-methyl-D-erythritol 4-phosphate cytidylyltransferase stretch occupies residues Met1–Arg240. Residues Arg240 to Asn405 are 2-C-methyl-D-erythritol 2,4-cyclodiphosphate synthase. The a divalent metal cation site is built by Asp246 and His248. 4-CDP-2-C-methyl-D-erythritol 2-phosphate-binding positions include Asp246–His248 and His277–Ser278. Residue His285 coordinates a divalent metal cation. 4-CDP-2-C-methyl-D-erythritol 2-phosphate is bound by residues Asp299 to Gly301, Thr375 to Glu378, and Arg385.

This sequence in the N-terminal section; belongs to the IspD/TarI cytidylyltransferase family. IspD subfamily. In the C-terminal section; belongs to the IspF family. It depends on a divalent metal cation as a cofactor.

The catalysed reaction is 2-C-methyl-D-erythritol 4-phosphate + CTP + H(+) = 4-CDP-2-C-methyl-D-erythritol + diphosphate. It catalyses the reaction 4-CDP-2-C-methyl-D-erythritol 2-phosphate = 2-C-methyl-D-erythritol 2,4-cyclic diphosphate + CMP. It functions in the pathway isoprenoid biosynthesis; isopentenyl diphosphate biosynthesis via DXP pathway; isopentenyl diphosphate from 1-deoxy-D-xylulose 5-phosphate: step 2/6. The protein operates within isoprenoid biosynthesis; isopentenyl diphosphate biosynthesis via DXP pathway; isopentenyl diphosphate from 1-deoxy-D-xylulose 5-phosphate: step 4/6. Bifunctional enzyme that catalyzes the formation of 4-diphosphocytidyl-2-C-methyl-D-erythritol from CTP and 2-C-methyl-D-erythritol 4-phosphate (MEP) (IspD), and catalyzes the conversion of 4-diphosphocytidyl-2-C-methyl-D-erythritol 2-phosphate (CDP-ME2P) to 2-C-methyl-D-erythritol 2,4-cyclodiphosphate (ME-CPP) with a corresponding release of cytidine 5-monophosphate (CMP) (IspF). This Wolbachia sp. subsp. Brugia malayi (strain TRS) protein is Bifunctional enzyme IspD/IspF.